The primary structure comprises 425 residues: MQTVIKNGTVYQNGRLIHADVLIEDQKIKAIGTDLTGDKVIDATGKLVSPGLVDVHVHYRDPGQTYKEDIETGSKAAAHGGFTTVGAMPNVTPVPDTPDLMKKMVQENKQKGIVHIFQYGPITKNETTDELPDYAALKKAGAFALSNDGHGVQTAQTMYLAMQEAKKNDLIVAAHAQDDSLFNHGIVNEGEKAKELNLPPVTELAETTQIARDLLLAEKTGVHYHICHVSTKTSVELVRMAKACGINVTCEAAPHHLLLTEDDIPKDNGYYKMNPPLRSKEDQAALLVGLLDGTIDLIATDHAPHAKQEKQGGMQNAAFGITGSETAFSTLYTKFVKEDKVFTLEQLLSWLSDQPAKVFGLKKAGVLEPGCPADVAIFDLEHETELKEKNYQSKGINTPFTGQKIYGATVMTMVDGEVVYQRGEK.

Zn(2+) is bound by residues H56 and H58. Residues 58–60 and N90 contribute to the substrate site; that span reads HYR. Zn(2+) is bound by residues D148, H175, and H228. N274 provides a ligand contact to substrate. D301 contributes to the Zn(2+) binding site. D301 is an active-site residue. Substrate is bound by residues H305 and 319 to 320; that span reads FG.

This sequence belongs to the metallo-dependent hydrolases superfamily. DHOase family. Class I DHOase subfamily. Zn(2+) is required as a cofactor.

It carries out the reaction (S)-dihydroorotate + H2O = N-carbamoyl-L-aspartate + H(+). The protein operates within pyrimidine metabolism; UMP biosynthesis via de novo pathway; (S)-dihydroorotate from bicarbonate: step 3/3. In terms of biological role, catalyzes the reversible cyclization of carbamoyl aspartate to dihydroorotate. In Lactobacillus delbrueckii subsp. bulgaricus (strain ATCC 11842 / DSM 20081 / BCRC 10696 / JCM 1002 / NBRC 13953 / NCIMB 11778 / NCTC 12712 / WDCM 00102 / Lb 14), this protein is Dihydroorotase.